We begin with the raw amino-acid sequence, 173 residues long: Crossover junction endodeoxyribonuclease RuvC (173 aa).

Catalysis depends on residues D8, E67, and D139. Mg(2+)-binding residues include D8, E67, and D139.

The protein belongs to the RuvC family. In terms of assembly, homodimer which binds Holliday junction (HJ) DNA. The HJ becomes 2-fold symmetrical on binding to RuvC with unstacked arms; it has a different conformation from HJ DNA in complex with RuvA. In the full resolvosome a probable DNA-RuvA(4)-RuvB(12)-RuvC(2) complex forms which resolves the HJ. Mg(2+) is required as a cofactor.

It localises to the cytoplasm. It carries out the reaction Endonucleolytic cleavage at a junction such as a reciprocal single-stranded crossover between two homologous DNA duplexes (Holliday junction).. Functionally, the RuvA-RuvB-RuvC complex processes Holliday junction (HJ) DNA during genetic recombination and DNA repair. Endonuclease that resolves HJ intermediates. Cleaves cruciform DNA by making single-stranded nicks across the HJ at symmetrical positions within the homologous arms, yielding a 5'-phosphate and a 3'-hydroxyl group; requires a central core of homology in the junction. The consensus cleavage sequence is 5'-(A/T)TT(C/G)-3'. Cleavage occurs on the 3'-side of the TT dinucleotide at the point of strand exchange. HJ branch migration catalyzed by RuvA-RuvB allows RuvC to scan DNA until it finds its consensus sequence, where it cleaves and resolves the cruciform DNA. The protein is Crossover junction endodeoxyribonuclease RuvC of Photobacterium profundum (strain SS9).